A 201-amino-acid polypeptide reads, in one-letter code: MNYLKNIFYWSKLNYDEQQKILSRPILNRNHTVKDTVKKVIENVKNFGDNALRKYSILFDKFNVNEFRIPEEKIISSFLNINENLKSSILIAKKNITSFHEAQILSTIDIETQIGVRCQQVYLPLNSVGIYIPNGTTSLFSSVLMLAIPAKIAGCKEIILCSPPPINNNILYASYVCGIKKIFQVGGAQAIAALAFGTETI.

The protein belongs to the histidinol dehydrogenase family. As to quaternary structure, homodimer. It depends on Zn(2+) as a cofactor.

The enzyme catalyses L-histidinol + 2 NAD(+) + H2O = L-histidine + 2 NADH + 3 H(+). It functions in the pathway amino-acid biosynthesis; L-histidine biosynthesis; L-histidine from 5-phospho-alpha-D-ribose 1-diphosphate: step 9/9. Catalyzes the sequential NAD-dependent oxidations of L-histidinol to L-histidinaldehyde and then to L-histidine. The sequence is that of Histidinol dehydrogenase (hisD) from Buchnera aphidicola subsp. Diuraphis noxia.